The following is a 581-amino-acid chain: ATP-dependent lipid A-core flippase (581 aa).

Transmembrane regions (helical) follow at residues Thr-21–Ile-41, Phe-65–Leu-85, Ala-138–Tyr-158, Trp-161–Val-181, Leu-246–Val-266, and Met-271–Leu-291. The ABC transmembrane type-1 domain maps to Ile-24–Arg-306. An ABC transporter domain is found at Ile-338–Met-575. Position 372 to 379 (Gly-372 to Ser-379) interacts with ATP.

It belongs to the ABC transporter superfamily. Lipid exporter (TC 3.A.1.106) family. In terms of assembly, homodimer.

It localises to the cell inner membrane. It catalyses the reaction ATP + H2O + lipid A-core oligosaccharideSide 1 = ADP + phosphate + lipid A-core oligosaccharideSide 2.. Involved in lipopolysaccharide (LPS) biosynthesis. Translocates lipid A-core from the inner to the outer leaflet of the inner membrane. Transmembrane domains (TMD) form a pore in the inner membrane and the ATP-binding domain (NBD) is responsible for energy generation. The protein is ATP-dependent lipid A-core flippase of Pseudoalteromonas translucida (strain TAC 125).